The chain runs to 59 residues: Large ribosomal subunit protein bL33 (59 aa).

This sequence belongs to the bacterial ribosomal protein bL33 family.

This chain is Large ribosomal subunit protein bL33, found in Borrelia recurrentis (strain A1).